The sequence spans 196 residues: Holliday junction branch migration complex subunit RuvA (196 aa).

Residues 1–64 form a domain I region; that stretch reads MIDRLRGQLV…EDAMLLFGFA (64 aa). Residues 65 to 143 form a domain II region; the sequence is TREEREAFDA…AAAGGGGGVA (79 aa). Positions 144 to 153 are flexible linker; sequence AGEGDGPFME. The tract at residues 153–196 is domain III; that stretch reads EAREALTGLGYSLEEAERALRDVPPQETVEQYIKAALRKIGGRR.

The protein belongs to the RuvA family. Homotetramer. Forms an RuvA(8)-RuvB(12)-Holliday junction (HJ) complex. HJ DNA is sandwiched between 2 RuvA tetramers; dsDNA enters through RuvA and exits via RuvB. An RuvB hexamer assembles on each DNA strand where it exits the tetramer. Each RuvB hexamer is contacted by two RuvA subunits (via domain III) on 2 adjacent RuvB subunits; this complex drives branch migration. In the full resolvosome a probable DNA-RuvA(4)-RuvB(12)-RuvC(2) complex forms which resolves the HJ.

Its subcellular location is the cytoplasm. Functionally, the RuvA-RuvB-RuvC complex processes Holliday junction (HJ) DNA during genetic recombination and DNA repair, while the RuvA-RuvB complex plays an important role in the rescue of blocked DNA replication forks via replication fork reversal (RFR). RuvA specifically binds to HJ cruciform DNA, conferring on it an open structure. The RuvB hexamer acts as an ATP-dependent pump, pulling dsDNA into and through the RuvAB complex. HJ branch migration allows RuvC to scan DNA until it finds its consensus sequence, where it cleaves and resolves the cruciform DNA. This chain is Holliday junction branch migration complex subunit RuvA, found in Rubrobacter xylanophilus (strain DSM 9941 / JCM 11954 / NBRC 16129 / PRD-1).